The chain runs to 316 residues: Olfactory receptor 5AP2 (316 aa).

The Extracellular segment spans residues 1–34 (MRLMKEVRGRNQTEVTEFLLLGLSDNPDLQGVLF). The N-linked (GlcNAc...) asparagine glycan is linked to Asn-11. A helical membrane pass occupies residues 35–55 (ALFLLIYMANMVGNLGMIVLI). Residue Lys-56 is a topological domain, cytoplasmic. Residues 57-77 (IDLCLHTPMYFFLSSLSFVDA) form a helical membrane-spanning segment. Residues 78 to 104 (SYSSSVTPKMLVNLMAENKAISFHGCA) are Extracellular-facing. Cys-103 and Cys-195 are disulfide-bonded. A helical transmembrane segment spans residues 105–125 (AQFYFFGSFLGTECFLLAMMA). Residues 126 to 135 (YDRYAAIWNP) are Cytoplasmic-facing. A helical transmembrane segment spans residues 136–156 (LLYPVLVSGRICFLLIATSFL). Over 157–210 (AGCGNAAIHTGMTFRLSFCGSNRINHFYCDTPPLLKLSCSDTHFNGIVIMAFSS) the chain is Extracellular. A helical membrane pass occupies residues 211–231 (FIVISCVMIVLISYLCIFIAV). Over 232–245 (LKMPSLEGRHKAFS) the chain is Cytoplasmic. Residues 246–266 (TCASYLMAVTIFFGTILFMYL) form a helical membrane-spanning segment. Over 267–278 (RPTSSYSMEQDK) the chain is Extracellular. Residues 279–299 (VVSVFYTVIIPVLNPLIYSLK) form a helical membrane-spanning segment. The Cytoplasmic segment spans residues 300 to 316 (NKDVKKALKKILWKHIL).

This sequence belongs to the G-protein coupled receptor 1 family.

It localises to the cell membrane. Odorant receptor. This chain is Olfactory receptor 5AP2, found in Homo sapiens (Human).